The sequence spans 64 residues: Conotoxin Vc1.3 (64 aa).

Positions methionine 1 to serine 21 are cleaved as a signal peptide. Residues phenylalanine 22–isoleucine 43 constitute a propeptide that is removed on maturation. 2 cysteine pairs are disulfide-bonded: cysteine 46-cysteine 52 and cysteine 47-cysteine 60. Position 60 is a cysteine amide (cysteine 60).

This sequence belongs to the conotoxin A superfamily. Expressed by the venom duct.

The protein localises to the secreted. Its function is as follows. May act as a toxin. This is Conotoxin Vc1.3 from Conus victoriae (Queen Victoria cone).